Reading from the N-terminus, the 784-residue chain is Cation/H(+) antiporter 26 (784 aa).

A run of 11 helical transmembrane segments spans residues 38 to 58 (PLLL…QALL), 61 to 81 (LANV…PSAL), 97 to 117 (YFII…ISTA), 130 to 150 (LAII…AIAC), 201 to 221 (LALS…LLLI), 240 to 260 (FTKV…FNWI), 286 to 306 (TFLS…LGLV), 321 to 341 (IGSF…GNKV), 351 to 371 (IISL…SIVL), 376 to 396 (FQVP…QGIY), and 413 to 433 (EAFG…TAIV).

The protein belongs to the monovalent cation:proton antiporter 2 (CPA2) transporter (TC 2.A.37) family. CHX (TC 2.A.37.4) subfamily. In terms of tissue distribution, expressed in pollen.

Its subcellular location is the membrane. Functionally, may operate as a cation/H(+) antiporter. The chain is Cation/H(+) antiporter 26 (CHX26) from Arabidopsis thaliana (Mouse-ear cress).